Consider the following 552-residue polypeptide: Steroid transmembrane transporter SLC22A24 (552 aa).

The next 12 helical transmembrane spans lie at 16-36 (FQIL…PHML), 144-164 (LISV…LIFG), 178-198 (CCLL…TFPV), 204-224 (FLGG…MSEW), 235-255 (GIIL…GFVI), 267-287 (IPLF…QWLI), 350-370 (IFYL…LMLN), 378-398 (IFLF…AVLL), 407-427 (ISQM…IFLS), 435-455 (VALA…HTVH), 469-489 (IGLN…LMIL), and 496-516 (LPWI…LLLP). Positions 524 to 552 (PNTIQDVENNRRDSRKTKQEDISMKVTQF) are disordered. The span at 531–546 (ENNRRDSRKTKQEDIS) shows a compositional bias: basic and acidic residues.

This sequence belongs to the major facilitator (TC 2.A.1) superfamily. Organic cation transporter (TC 2.A.1.19) family.

Its subcellular location is the cell membrane. The enzyme catalyses estrone 3-sulfate(out) + glutarate(in) = estrone 3-sulfate(in) + glutarate(out). The catalysed reaction is 17beta-estradiol 17-O-(beta-D-glucuronate)(out) + glutarate(in) = 17beta-estradiol 17-O-(beta-D-glucuronate)(in) + glutarate(out). It catalyses the reaction taurocholate(out) + glutarate(in) = taurocholate(in) + glutarate(out). It carries out the reaction glycocholate(out) + glutarate(in) = glycocholate(in) + glutarate(out). The enzyme catalyses dehydroepiandrosterone 3-sulfate(out) + glutarate(in) = dehydroepiandrosterone 3-sulfate(in) + glutarate(out). The catalysed reaction is glutarate(in) + succinate(out) = glutarate(out) + succinate(in). Renal transmembrane organic anion/dicarboxylate exchanger that participates in the reabsorption of conjugated steroids, as well as bile acids, driven by an outward gradient of dicarboxylates such as glutarate or succinate. Transports taurocholate, estrone 3-sulfate, and estradiol-17-glucuronide (17beta-estradiol 17-O-(beta-D-glucuronate)), but not androstanediol glucuronide (5alpha-androstane-3alpha,17beta-diol 3-O-(beta-D-glucuronate)). The protein is Steroid transmembrane transporter SLC22A24 of Equus caballus (Horse).